Consider the following 169-residue polypeptide: Endoribonuclease YbeY (169 aa).

Residues H130, H134, and H140 each contribute to the Zn(2+) site.

Belongs to the endoribonuclease YbeY family. Zn(2+) serves as cofactor.

Its subcellular location is the cytoplasm. Single strand-specific metallo-endoribonuclease involved in late-stage 70S ribosome quality control and in maturation of the 3' terminus of the 16S rRNA. The chain is Endoribonuclease YbeY from Neisseria meningitidis serogroup B (strain ATCC BAA-335 / MC58).